A 380-amino-acid chain; its full sequence is Anthranilate phosphoribosyltransferase (380 aa).

7 residues coordinate 5-phospho-alpha-D-ribose 1-diphosphate: Gly-109, Asn-119, Ser-121, Thr-122, Lys-142, Ser-144, and Ser-146. Mg(2+)-binding residues include Asp-258 and Glu-259.

Belongs to the anthranilate phosphoribosyltransferase family. As to quaternary structure, homodimer. Requires Mg(2+) as cofactor.

It carries out the reaction N-(5-phospho-beta-D-ribosyl)anthranilate + diphosphate = 5-phospho-alpha-D-ribose 1-diphosphate + anthranilate. The protein operates within amino-acid biosynthesis; L-tryptophan biosynthesis; L-tryptophan from chorismate: step 2/5. Functionally, catalyzes the transfer of the phosphoribosyl group of 5-phosphorylribose-1-pyrophosphate (PRPP) to anthranilate to yield N-(5'-phosphoribosyl)-anthranilate (PRA), the second step in tryptophan biosynthesis. This Saccharomyces cerevisiae (strain ATCC 204508 / S288c) (Baker's yeast) protein is Anthranilate phosphoribosyltransferase.